The sequence spans 593 residues: MASFSQLASSPEEPDFERRFLRYRGEDTSPTGRREIWGWYAYGVAAEVFAVCGVGSFLPLTLEQLAREQGFLSSSHLPCVGPDAPPAAGNGTAPANEACVVPLMGLEINTASFAMYTFSLAVLIQALTLVSFSALADYENNRKALLLAFGFIGSATSMLFMLIVPPVFVLGALLVVIGVTCLGSSFVVLNSFLPILVANDPSVQRASNKNKDDLHDLHTEGDEFSLRSWTDEEDTGDHAGPAGSKKAVEPEKASSSTSPELQLSTRISSRGVGLGYCAAVLVQILSILLLFTLSKTSMGKSHPTLPLRFVLLLVGIWWAAFTVVCSRWLRSRPGPPLEGVTPGAGYRQKWRVWLRVVGFAWKSLWNTIKVALRLREVVVFLAAWFLISDAIATVSGTAILFARTELHLSTVSVGLLSITATMSGMAGAFLWPIVARRFALASNHTILLCIALFEIIPLYGMLAYIPFIRNWGVLGLQKPWEIFPLGIVHGVVSGGLASYCRSLFGELIPPGSEAAFYALYAATDKGSSFVGPAIVGALIDATGSVRSGFIFIGVLILLPMPLVWLVNAERGRQDAIAMVKHAPNSEEGEGLLR.

A helical membrane pass occupies residues 42–62 (YGVAAEVFAVCGVGSFLPLTL). Residue Asn90 is glycosylated (N-linked (GlcNAc...) asparagine). The next 3 membrane-spanning stretches (helical) occupy residues 112-132 (SFAMYTFSLAVLIQALTLVSF), 159-179 (LFMLIVPPVFVLGALLVVIGV), and 181-201 (CLGSSFVVLNSFLPILVANDP). The tract at residues 228–261 (SWTDEEDTGDHAGPAGSKKAVEPEKASSSTSPEL) is disordered. The next 4 membrane-spanning stretches (helical) occupy residues 271 to 291 (GVGLGYCAAVLVQILSILLLF), 305 to 325 (LPLRFVLLLVGIWWAAFTVVC), 377 to 397 (VVVFLAAWFLISDAIATVSGT), and 415 to 435 (LLSITATMSGMAGAFLWPIVA). The N-linked (GlcNAc...) asparagine glycan is linked to Asn443. 4 helical membrane-spanning segments follow: residues 448–468 (LCIALFEIIPLYGMLAYIPFI), 480–500 (WEIFPLGIVHGVVSGGLASYC), 525–545 (KGSSFVGPAIVGALIDATGSV), and 548–568 (GFIFIGVLILLPMPLVWLVNA).

This sequence belongs to the ATG22 family.

It localises to the vacuole membrane. In terms of biological role, vacuolar effluxer which mediate the efflux of amino acids resulting from autophagic degradation. The release of autophagic amino acids allows the maintenance of protein synthesis and viability during nitrogen starvation. The protein is Autophagy-related protein 22-2 (atg22-2) of Emericella nidulans (strain FGSC A4 / ATCC 38163 / CBS 112.46 / NRRL 194 / M139) (Aspergillus nidulans).